The following is a 111-amino-acid chain: Large ribosomal subunit protein uL22 (111 aa).

The protein belongs to the universal ribosomal protein uL22 family. In terms of assembly, part of the 50S ribosomal subunit.

Its function is as follows. This protein binds specifically to 23S rRNA; its binding is stimulated by other ribosomal proteins, e.g. L4, L17, and L20. It is important during the early stages of 50S assembly. It makes multiple contacts with different domains of the 23S rRNA in the assembled 50S subunit and ribosome. Functionally, the globular domain of the protein is located near the polypeptide exit tunnel on the outside of the subunit, while an extended beta-hairpin is found that lines the wall of the exit tunnel in the center of the 70S ribosome. This is Large ribosomal subunit protein uL22 from Thermoanaerobacter pseudethanolicus (strain ATCC 33223 / 39E) (Clostridium thermohydrosulfuricum).